A 207-amino-acid chain; its full sequence is High mobility group protein B2 (207 aa).

2 DNA-binding regions (HMG box) span residues 9–79 and 95–163; these read PRGK…KNYV and PKRP…AAYR. 2 positions are modified to cysteine sulfonic acid (-SO3H); alternate: Cys23 and Cys45. A disulfide bridge links Cys23 with Cys45. Basic and acidic residues predominate over residues 52 to 76; sequence MSSKEKGKFEEMAKGDKARYDREMK. The interval 52-102 is disordered; sequence MSSKEKGKFEEMAKGDKARYDREMKNYVPPKGEKKGKKKDPNAPKRPPSAF. Cysteine sulfonic acid (-SO3H) is present on Cys106. Basic and acidic residues predominate over residues 162–172; it reads YRAKSKSDAGK. The interval 162 to 207 is disordered; that stretch reads YRAKSKSDAGKKGPGRPAGSKKKAEPEEEEEEEEDEEEEEEEEDEE. A compositionally biased stretch (acidic residues) spans 187-207; that stretch reads PEEEEEEEEDEEEEEEEEDEE.

Belongs to the HMGB family. In terms of processing, reduction/oxidation of cysteine residues Cys-23, Cys-45 and Cys-106 and a possible intramolecular disulfide bond involving Cys-23 and Cys-45 give rise to different redox forms with specific functional activities in various cellular compartments: 1- fully reduced HMGB2 (HMGB2C23hC45hC106h), 2- disulfide HMGB2 (HMGB2C23-C45C106h) and 3- sulfonyl HMGB2 (HMGB2C23soC45soC106so).

Its subcellular location is the nucleus. The protein resides in the chromosome. It is found in the cytoplasm. The protein localises to the secreted. Its function is as follows. Multifunctional protein with various roles in different cellular compartments. May act in a redox sensitive manner. Associates with chromatin and binds DNA with a preference to non-canonical DNA structures such as single-stranded DNA. Can bent DNA and enhance DNA flexibility by looping thus providing a mechanism to promote activities on various gene promoters. Proposed to be involved in the innate immune response to nucleic acids by acting as a cytoplasmic promiscuous immunogenic DNA/RNA sensor. Involved in inflammatory response to antigenic stimulus coupled with pro-inflammatory activity. This chain is High mobility group protein B2 (HMGB2), found in Gallus gallus (Chicken).